A 375-amino-acid polypeptide reads, in one-letter code: Succinyl-diaminopimelate desuccinylase (375 aa).

H66 provides a ligand contact to Zn(2+). Residue D68 is part of the active site. Residue D99 coordinates Zn(2+). Catalysis depends on E133, which acts as the Proton acceptor. Zn(2+) is bound by residues E134, E162, and H348.

This sequence belongs to the peptidase M20A family. DapE subfamily. Homodimer. Zn(2+) serves as cofactor. Requires Co(2+) as cofactor.

The catalysed reaction is N-succinyl-(2S,6S)-2,6-diaminopimelate + H2O = (2S,6S)-2,6-diaminopimelate + succinate. The protein operates within amino-acid biosynthesis; L-lysine biosynthesis via DAP pathway; LL-2,6-diaminopimelate from (S)-tetrahydrodipicolinate (succinylase route): step 3/3. Catalyzes the hydrolysis of N-succinyl-L,L-diaminopimelic acid (SDAP), forming succinate and LL-2,6-diaminopimelate (DAP), an intermediate involved in the bacterial biosynthesis of lysine and meso-diaminopimelic acid, an essential component of bacterial cell walls. The protein is Succinyl-diaminopimelate desuccinylase of Methylobacillus flagellatus (strain ATCC 51484 / DSM 6875 / VKM B-1610 / KT).